Reading from the N-terminus, the 142-residue chain is Cell division protein SepF (142 aa).

This sequence belongs to the SepF family. In terms of assembly, homodimer. Interacts with FtsZ.

The protein localises to the cytoplasm. Cell division protein that is part of the divisome complex and is recruited early to the Z-ring. Probably stimulates Z-ring formation, perhaps through the cross-linking of FtsZ protofilaments. Its function overlaps with FtsA. The sequence is that of Cell division protein SepF from Syntrophomonas wolfei subsp. wolfei (strain DSM 2245B / Goettingen).